A 151-amino-acid chain; its full sequence is Large ribosomal subunit protein bL9 (151 aa).

It belongs to the bacterial ribosomal protein bL9 family.

Functionally, binds to the 23S rRNA. The chain is Large ribosomal subunit protein bL9 from Desulfotalea psychrophila (strain LSv54 / DSM 12343).